A 93-amino-acid polypeptide reads, in one-letter code: Small ribosomal subunit protein uS19c (93 aa).

It belongs to the universal ribosomal protein uS19 family.

The protein localises to the plastid. Its subcellular location is the chloroplast. In terms of biological role, protein S19 forms a complex with S13 that binds strongly to the 16S ribosomal RNA. In Brachypodium distachyon (Purple false brome), this protein is Small ribosomal subunit protein uS19c.